Reading from the N-terminus, the 496-residue chain is Glycylpeptide N-tetradecanoyltransferase 1 (496 aa).

Residues 1–82 (MADESETAVK…STQDQPVKMT (82 aa)) form a disordered region. Phosphoserine is present on residues serine 31 and serine 47. Residues 55–66 (KKKKKKQKKKKE) are compositionally biased toward basic residues. The residue at position 83 (serine 83) is a Phosphoserine. Positions 118, 119, 120, 247, 248, 249, 250, 256, 258, 259, and 260 each coordinate tetradecanoyl-CoA.

The protein belongs to the NMT family. As to expression, ubiquitous.

The protein resides in the cytoplasm. Its subcellular location is the cytosol. It localises to the membrane. The enzyme catalyses N-terminal glycyl-[protein] + tetradecanoyl-CoA = N-tetradecanoylglycyl-[protein] + CoA + H(+). The catalysed reaction is N-terminal glycyl-L-lysyl-[protein] + tetradecanoyl-CoA = N-terminal glycyl-(N(6)-tetradecanoyl)-L-lysyl-[protein] + CoA + H(+). In terms of biological role, adds a myristoyl group to the N-terminal glycine residue of certain cellular and viral proteins. Also able to mediate N-terminal lysine myristoylation of proteins: catalyzes myristoylation of ARF6 on both 'Gly-2' and 'Lys-3'. Lysine myristoylation is required to maintain ARF6 on membranes during the GTPase cycle. Required for normal embryogenesis. This Mus musculus (Mouse) protein is Glycylpeptide N-tetradecanoyltransferase 1.